The following is a 178-amino-acid chain: MDSQGPIILEKSIKIEEVIKIAITSIIDIVTKTVTPEIKAPYELVDVEYDKMGSDYILSILVDKEGGITVEDTSDLTNIISPLLDTIDPDPFPNQYMLEVSSPGLERPLKTADSLKAAVGSYINVSLYQAIDKVKVFQGDLLAFDGETLTIDYLDKTRHKIVNIPYQAVAKVRMAVKL.

Belongs to the RimP family.

It localises to the cytoplasm. Required for maturation of 30S ribosomal subunits. In Streptococcus pyogenes serotype M4 (strain MGAS10750), this protein is Ribosome maturation factor RimP.